The following is an 862-amino-acid chain: Fork head protein homolog 2 (862 aa).

Positions 83–152 constitute an FHA domain; the sequence is VSIGRNTDPL…NGAKVNFQRT (70 aa). Residues 339–430 constitute a DNA-binding region (fork-head); the sequence is VKPPHSYATM…QQEFLNKWNT (92 aa). 4 disordered regions span residues 498–528, 611–663, 698–730, and 750–846; these read PSKG…QEQR, SDSA…GTTT, PERG…LQTS, and ESNN…ANAK. Low complexity predominate over residues 504–520; sequence PASQQSQPPVSHQNQSQ. Positions 611-644 are enriched in polar residues; it reads SDSADKSTNNNGGTKMNLPAISTSSLDENGNLEP. Residues 645–655 show a composition bias toward low complexity; that stretch reads TTTTSSGNSNS. Serine 708 is subject to Phosphoserine. The segment covering 712 to 726 has biased composition (low complexity); the sequence is SNSNNTNNNGANNSN. Polar residues-rich tracts occupy residues 750–770 and 778–788; these read ESNN…NVKS and LQFSSTNNTPA. A compositionally biased stretch (basic and acidic residues) spans 804–829; sequence IKAKENENATSEKDSDSNSNDLETKD. Over residues 830-844 the composition is skewed to polar residues; it reads INSSPLKNQGGSTAN. Phosphoserine is present on residues serine 832 and serine 833.

As to quaternary structure, interacts with MCM1. Interacts with NDD1. Interacts with the origin recognition complex (ORC) composed of ORC1 to ORC6.

The protein resides in the nucleus. It localises to the cytoplasm. It is found in the cytosol. In terms of biological role, transcription factor that regulates the expression of the CLB2 cluster of genes during the G2/M phase of the mitotic cell cycle. The CLB2 cluster of genes includes mitotic regulators such as CLB1, CLB2, CDC5 and CDC20 as well as SWI5 and ACE2, transcription factors required for the subsequent temporal wave of cell cycle regulated gene expression in the M/G1 phase interval. Involved in HMRa silencing. FKH1 and FKH2 associate with the coding regions of active genes and influence, in opposing ways, transcriptional elongation and termination, and coordinate early transcription elongation and pre-mRNA processing. Both FKH1 and FKH2 play a role as regulators of lifespan in collaboration with the anaphase-promoting complex (APC), likely through combined regulation of stress response, genomic stability, and cell cycle regulation. FKH1 and FKH2 function also in controlling yeast cell morphology by preventing preudohyphal growth. Acts as a rate-limiting replication origin activator via its interaction with the origin recognition complex (ORC). The protein is Fork head protein homolog 2 of Saccharomyces cerevisiae (strain ATCC 204508 / S288c) (Baker's yeast).